The sequence spans 410 residues: Cytochrome P450(BM-1) (410 aa).

Residue Cys356 coordinates heme.

It belongs to the cytochrome P450 family. Heme is required as a cofactor.

It is found in the cytoplasm. Cytochromes P450 are a group of heme-thiolate monooxygenases. They oxidize a variety of structurally unrelated compounds, including steroids, fatty acids, and xenobiotics. This is Cytochrome P450(BM-1) (cyp106) from Priestia megaterium (strain ATCC 14581 / DSM 32 / CCUG 1817 / JCM 2506 / NBRC 15308 / NCIMB 9376 / NCTC 10342 / NRRL B-14308 / VKM B-512 / Ford 19) (Bacillus megaterium).